The sequence spans 27 residues: Voltage-dependent anion-selective channel protein (27 aa).

It belongs to the eukaryotic mitochondrial porin family. As to quaternary structure, interacts with hexokinases. In terms of tissue distribution, photoreceptors.

The protein resides in the mitochondrion outer membrane. In terms of biological role, forms a channel through the cell membrane that allows diffusion of small hydrophilic molecules. The protein is Voltage-dependent anion-selective channel protein of Doryteuthis pealeii (Longfin inshore squid).